Reading from the N-terminus, the 230-residue chain is Osmotin-like protein PR-5x (230 aa).

The signal sequence occupies residues 1–25 (MYTNMGYLTSSFIFFFLALVTYTYA). 8 disulfides stabilise this stretch: Cys34–Cys229, Cys76–Cys86, Cys91–Cys97, Cys145–Cys217, Cys150–Cys200, Cys158–Cys168, Cys172–Cys181, and Cys182–Cys187.

The protein belongs to the thaumatin family.

The protein resides in the secreted. Its subcellular location is the vacuole. It catalyses the reaction Endohydrolysis of (1-&gt;3)- or (1-&gt;4)-linkages in beta-D-glucans when the glucose residue whose reducing group is involved in the linkage to be hydrolyzed is itself substituted at C-3.. In terms of biological role, antifungal protein. May bind to beta-glucans and have beta-1,3-D-glucanase activity. The chain is Osmotin-like protein PR-5x from Solanum lycopersicum (Tomato).